A 437-amino-acid polypeptide reads, in one-letter code: Sulfite reductase, dissimilatory-type subunit alpha (437 aa).

8 residues coordinate [4Fe-4S] cluster: Cys177, Cys183, Cys221, Cys225, Cys284, Cys303, Cys306, and Cys309. Residues 294–322 (SKLSIDNKECVRCMHCINTMPRALHIGDE) enclose the 4Fe-4S ferredoxin-type domain.

Heterohexamer of two alpha, two beta and two gamma subunits.

In terms of biological role, part of the complex that catalyzes the reduction of sulfite to sulfide. The alpha and beta subunits may have arisen by gene duplication. They both bind 2 iron-sulfur clusters, but the alpha subunit seems to be catalytically inactive, due to substitutions along the putative substrate access channel, and because it binds sirohydrochlorin (the dematallated form of siroheme) instead of siroheme. This is Sulfite reductase, dissimilatory-type subunit alpha (dsvA) from Nitratidesulfovibrio vulgaris (strain ATCC 29579 / DSM 644 / CCUG 34227 / NCIMB 8303 / VKM B-1760 / Hildenborough) (Desulfovibrio vulgaris).